The primary structure comprises 766 residues: Pentatricopeptide repeat-containing protein At3g61520, mitochondrial (766 aa).

Residues 1–30 constitute a mitochondrion transit peptide; the sequence is MSIMLSISRRRNSYILLNHSRFLRRFSYDV. 16 PPR repeats span residues 151–181, 184–218, 221–257, 258–292, 293–327, 328–358, 369–404, 405–439, 440–474, 475–509, 510–544, 545–579, 580–614, 615–650, 651–685, and 686–720; these read TVVA…LDSN, NSQV…ESVF, NRIT…GVSP, NSVW…KTPL, EAPP…KIRP, DVVT…MRGK, DSIH…RCAP, NAVT…EIKP, NVVT…GVKG, NVVT…GCSP, DAKI…GFSL, DLLA…GKKP, DSIT…GLDP, TVTT…KVNP, NTVI…MVRP, and NVET…SCEP.

It belongs to the PPR family. P subfamily.

The protein resides in the mitochondrion. This chain is Pentatricopeptide repeat-containing protein At3g61520, mitochondrial, found in Arabidopsis thaliana (Mouse-ear cress).